Consider the following 1198-residue polypeptide: DNA polymerase (1198 aa).

Disordered regions lie at residues 1 to 87 (MALV…PRGT), 179 to 199 (LEQP…PNPP), and 904 to 930 (QLAL…PPSG). 2 stretches are compositionally biased toward low complexity: residues 30–40 (QQPTRAAPAPA) and 57–68 (APPTSGGSPASP).

It belongs to the DNA polymerase type-B family. As to quaternary structure, heterodimer with the terminal protein; this heterodimer binds to bp 9 to 18 of the genome. Forms a complex with viral pTP, DBP and hosts NFIA and POU2F1/OCT1 for initiation of replication.

It is found in the host nucleus. The catalysed reaction is DNA(n) + a 2'-deoxyribonucleoside 5'-triphosphate = DNA(n+1) + diphosphate. Functionally, eukaryotic-type DNA polymerase involved in viral genomic replication. DNA synthesis is protein primed, and acts in a strand displacement replication. Assembles in complex with viral pTP, DBP, host NFIA and host POU2F1/OCT1 on viral origin of replication. The polymerase covalently transfers dCMP onto pTP, thereby initiating complementary strand synthesis. This Homo sapiens (Human) protein is DNA polymerase.